A 326-amino-acid polypeptide reads, in one-letter code: G-protein coupled receptor 1 (326 aa).

Ser-2 is subject to N-acetylserine. Residues 2–23 (SAVLTAGGGLTAGDRSIITAIN) lie on the Extracellular side of the membrane. A helical transmembrane segment spans residues 24–44 (TGASSLSFVGSAFIVLCYCLF). The Cytoplasmic segment spans residues 45–51 (KELRKFS). Residues 52 to 72 (FKLVFYLALSDMLCSFFLIVG) form a helical membrane-spanning segment. The Extracellular portion of the chain corresponds to 73–84 (DPSKGFICYAQG). A disulfide bridge connects residues Cys-80 and Cys-151. A helical membrane pass occupies residues 85–105 (YTTHFFCVASFLWTTTIAFTL). Over 106 to 120 (HRTVVKHKTDVEDLE) the chain is Cytoplasmic. Residues 121 to 141 (AMFHLYVWGTSLVVTVIRSFG) traverse the membrane as a helical segment. Over 142-160 (NNHSHLGPWCWTQTGLKGK) the chain is Extracellular. Residue Asn-143 is glycosylated (N-linked (GlcNAc...) asparagine). The helical transmembrane segment at 161–181 (AVHFLTFYAPLWGAILYNGFT) threads the bilayer. The Cytoplasmic portion of the chain corresponds to 182–213 (YFQVIRMLRNARRMAVGMSDRVDQFDNRAELK). A helical membrane pass occupies residues 214-234 (VLNRWGYYPLILIGSWAFGTI). Residues 235 to 246 (NRIHDFIEPGHK) are Extracellular-facing. The chain crosses the membrane as a helical span at residues 247 to 267 (IFWLSVLDVGTAALMGLFNSI). At 268-326 (AYGFNSSVRRAIHERLELFLPERLYRWLPSNFRPKNHLILHQQQQQRSEMVSLKTEDQQ) the chain is on the cytoplasmic side.

It belongs to the G-protein coupled receptor 2 family. As to quaternary structure, interacts with GPA1. In terms of tissue distribution, mostly present in the meristematic regions. Expressed at low levels in seedlings, vascular tissues of cotyledons, hypocotyl, and roots, stems, leaves, flowering buds and siliques. In dark-grown seedlings, localized in the cotyledons and the hook.

The protein localises to the cell membrane. Together with GPA1, may regulate the cell cycle via a signaling cascade that uses phosphatidylinositol-specific phospholipase C (PI-PLC) as an effector and inositol 1,4,5-trisphosphate(IP(3)) as a second messenger. Promotes PI-PLC activity and IP(3) accumulation. Involved in the blue light (BL) signaling. Together with GPA1 and ADT3, required for BL-mediated synthesis of phenylpyruvate and subsequently of phenylalanine (Phe), in etiolated seedlings. Probably involved in cytokinin signal transduction. Plays a positive role in gibberellin- (GA) and brassinosteroid- (BR) regulated seed germination, probably independently of a heterotrimeric G-protein. Mediates seed dormancy abolition, and promotes seed germination and flowering. The sequence is that of G-protein coupled receptor 1 (GCR1) from Arabidopsis thaliana (Mouse-ear cress).